A 261-amino-acid polypeptide reads, in one-letter code: Thiamine thiazole synthase (261 aa).

Residues Ala-33, 52–53 (ER), Gly-60, Val-124, and 152–154 (HVD) contribute to the NAD(+) site. 2 residues coordinate Fe cation: Asp-154 and His-169. Ile-219 is an NAD(+) binding site. Arg-229 is a binding site for glycine.

Belongs to the THI4 family. As to quaternary structure, homooctamer; tetramer of dimers. It depends on Fe(2+) as a cofactor.

It carries out the reaction hydrogen sulfide + glycine + NAD(+) = ADP-5-ethyl-4-methylthiazole-2-carboxylate + nicotinamide + 3 H2O + H(+). Its pathway is cofactor biosynthesis; thiamine diphosphate biosynthesis. Involved in the biosynthesis of the thiazole moiety of thiamine. Catalyzes the conversion of NAD and glycine to adenosine diphosphate 5-(2-hydroxyethyl)-4-methylthiazole-2-carboxylate (ADT), an adenylated thiazole intermediate, using free sulfide as a source of sulfur. The protein is Thiamine thiazole synthase of Pyrobaculum calidifontis (strain DSM 21063 / JCM 11548 / VA1).